Here is a 294-residue protein sequence, read N- to C-terminus: Bifunctional protein FolD (294 aa).

NADP(+)-binding positions include 171–173 (GRS), serine 196, and isoleucine 237.

Belongs to the tetrahydrofolate dehydrogenase/cyclohydrolase family. In terms of assembly, homodimer.

The enzyme catalyses (6R)-5,10-methylene-5,6,7,8-tetrahydrofolate + NADP(+) = (6R)-5,10-methenyltetrahydrofolate + NADPH. It catalyses the reaction (6R)-5,10-methenyltetrahydrofolate + H2O = (6R)-10-formyltetrahydrofolate + H(+). It participates in one-carbon metabolism; tetrahydrofolate interconversion. Its function is as follows. Catalyzes the oxidation of 5,10-methylenetetrahydrofolate to 5,10-methenyltetrahydrofolate and then the hydrolysis of 5,10-methenyltetrahydrofolate to 10-formyltetrahydrofolate. The protein is Bifunctional protein FolD of Synechocystis sp. (strain ATCC 27184 / PCC 6803 / Kazusa).